A 425-amino-acid polypeptide reads, in one-letter code: UDP-N-acetylglucosamine 1-carboxyvinyltransferase (425 aa).

K22–N23 is a phosphoenolpyruvate binding site. R93 is a UDP-N-acetyl-alpha-D-glucosamine binding site. The active-site Proton donor is the D117. D312 and M334 together coordinate UDP-N-acetyl-alpha-D-glucosamine.

It belongs to the EPSP synthase family. MurA subfamily.

Its subcellular location is the cytoplasm. The catalysed reaction is phosphoenolpyruvate + UDP-N-acetyl-alpha-D-glucosamine = UDP-N-acetyl-3-O-(1-carboxyvinyl)-alpha-D-glucosamine + phosphate. Its pathway is cell wall biogenesis; peptidoglycan biosynthesis. Functionally, cell wall formation. Adds enolpyruvyl to UDP-N-acetylglucosamine. The protein is UDP-N-acetylglucosamine 1-carboxyvinyltransferase of Treponema pallidum (strain Nichols).